The following is a 276-amino-acid chain: ESX-2 secretion-associated protein EspG2 (276 aa).

The protein belongs to the EspG family. Interacts specifically with ESX-2-dependent PE/PPE proteins.

It is found in the cytoplasm. In terms of biological role, specific chaperone for cognate PE/PPE proteins. Plays an important role in preventing aggregation of PE/PPE dimers. The sequence is that of ESX-2 secretion-associated protein EspG2 from Mycobacterium tuberculosis (strain CDC 1551 / Oshkosh).